The sequence spans 409 residues: Peptidase T (409 aa).

H78 is a binding site for Zn(2+). Residue D80 is part of the active site. Residue D139 participates in Zn(2+) binding. The Proton acceptor role is filled by E173. The Zn(2+) site is built by E174, D196, and H378.

Belongs to the peptidase M20B family. Requires Zn(2+) as cofactor.

The protein localises to the cytoplasm. The enzyme catalyses Release of the N-terminal residue from a tripeptide.. Functionally, cleaves the N-terminal amino acid of tripeptides. This is Peptidase T from Shewanella sediminis (strain HAW-EB3).